The primary structure comprises 374 residues: Chaperone protein DnaJ (374 aa).

The 65-residue stretch at 5 to 69 folds into the J domain; sequence DYYEVLGVSK…DKKAKYDQFG (65 aa). The segment at 141–223 adopts a CR-type zinc-finger fold; sequence GVNKKTILNL…CHGKGVESKR (83 aa). Zn(2+) contacts are provided by C154, C157, C171, C174, C197, C200, C211, and C214. CXXCXGXG motif repeat units lie at residues 154–161, 171–178, 197–204, and 211–218; these read CTKCDGVG, CTKCNGAG, CDKCNGVG, and CKNCHGKG.

This sequence belongs to the DnaJ family. In terms of assembly, homodimer. Requires Zn(2+) as cofactor.

Its subcellular location is the cytoplasm. Functionally, participates actively in the response to hyperosmotic and heat shock by preventing the aggregation of stress-denatured proteins and by disaggregating proteins, also in an autonomous, DnaK-independent fashion. Unfolded proteins bind initially to DnaJ; upon interaction with the DnaJ-bound protein, DnaK hydrolyzes its bound ATP, resulting in the formation of a stable complex. GrpE releases ADP from DnaK; ATP binding to DnaK triggers the release of the substrate protein, thus completing the reaction cycle. Several rounds of ATP-dependent interactions between DnaJ, DnaK and GrpE are required for fully efficient folding. Also involved, together with DnaK and GrpE, in the DNA replication of plasmids through activation of initiation proteins. The protein is Chaperone protein DnaJ of Mesoplasma florum (strain ATCC 33453 / NBRC 100688 / NCTC 11704 / L1) (Acholeplasma florum).